A 296-amino-acid polypeptide reads, in one-letter code: uncharacterized protein (296 aa).

Residues 7 to 26 (CFSLVCALGASTYLLWRGWL) traverse the membrane as a helical segment.

Its subcellular location is the membrane. This is an uncharacterized protein from Treponema pallidum (strain Nichols).